The sequence spans 219 residues: Ribonuclease T (219 aa).

The Exonuclease domain occupies 20-194 (VVIDIETAGF…YDSLQTANLF (175 aa)). Mg(2+) contacts are provided by aspartate 23, glutamate 25, histidine 181, and aspartate 186. The active-site Proton donor/acceptor is histidine 181.

This sequence belongs to the RNase T family. As to quaternary structure, homodimer. Mg(2+) is required as a cofactor.

Its function is as follows. Trims short 3' overhangs of a variety of RNA species, leaving a one or two nucleotide 3' overhang. Responsible for the end-turnover of tRNA: specifically removes the terminal AMP residue from uncharged tRNA (tRNA-C-C-A). Also appears to be involved in tRNA biosynthesis. The chain is Ribonuclease T from Buchnera aphidicola subsp. Schizaphis graminum (strain Sg).